The chain runs to 60 residues: Ixodegrin YY-39 (60 aa).

The signal sequence occupies residues 1–21; the sequence is MNAALIAALLILGALTLDATA. The Cell attachment site signature appears at 49-51; that stretch reads RGD.

This sequence belongs to the ixodegrin family. Post-translationally, contains 3 disulfide bonds. As to expression, expressed in salivary glands.

The protein localises to the secreted. Tick salivary platelet aggregation inhibitor that plays an important part in the anti-hemostatic strategy of ticks. Inhibits platelet aggregation induced by ADP, thrombin and thromboxane A2 (TXA2). Blocks platelet adhesion to soluble collagen (most probably through the binding to alpha-2/beta-1 integrin (ITGA2/ITGB1)) and binds to purified glycoprotein IIb/IIIa (ITGA2B/ITGB3) in a dose-dependent manner. In vivo, reduces thrombus weight effectively in a rat arteriovenous shunt model and inhibits thrombosis in a carrageenan-induced mouse tail thrombosis model. In Ixodes scapularis (Black-legged tick), this protein is Ixodegrin YY-39.